Consider the following 283-residue polypeptide: Gap junction beta-1 protein (283 aa).

The Cytoplasmic portion of the chain corresponds to 1-22 (MNWTGLYTLLSGVNRHSTAIGR). Residues 23-45 (VWLSVIFIFRIMVLVVAAESVWG) traverse the membrane as a helical segment. Residues 46 to 75 (DEKSSFICNTLQPGCNSVCYDHFFPISHVR) lie on the Extracellular side of the membrane. The chain crosses the membrane as a helical span at residues 76 to 95 (LWSLQLILVSTPALLVAMHV). At 96–130 (AHQQHIEKKMLRLEGHGDPIHLEEVKRHKVHISGT) the chain is on the cytoplasmic side. A helical transmembrane segment spans residues 131–153 (LWWTYVISVVFRLLFEAAFMYVF). Residues 154–191 (YLLYPGYAMVRLVKCDAYPCPNTVDCFVSRPTEKTVFT) lie on the Extracellular side of the membrane. The chain crosses the membrane as a helical span at residues 192–214 (VFMLAASGICIILNVAEVVYLIV). Topologically, residues 215–283 (RACARRAQRR…AEKSDRCSAC (69 aa)) are cytoplasmic. Residues Ser-233, Ser-258, Ser-266, and Ser-277 each carry the phosphoserine modification.

Belongs to the connexin family. Beta-type (group I) subfamily. A connexon is composed of a hexamer of connexins. Interacts with CNST.

The protein resides in the cell membrane. The protein localises to the cell junction. It is found in the gap junction. One gap junction consists of a cluster of closely packed pairs of transmembrane channels, the connexons, through which materials of low MW diffuse from one cell to a neighboring cell. In Equus caballus (Horse), this protein is Gap junction beta-1 protein (GJB1).